The sequence spans 1251 residues: Botulinum neurotoxin type E (1251 aa).

His212 contacts Zn(2+). Glu213 is an active-site residue. Zn(2+) is bound by residues His216 and Glu251. Cys412 and Cys426 are oxidised to a cystine. The interval Lys423 to Leu819 is translocation domain (TD). The tract at residues Asn466–Asn515 is belt. Positions Lys845–Pro1067 are N-terminus of receptor binding domain (N-RBD). The segment at Asn1068 to Lys1251 is C-terminus of receptor binding domain (C-RBD). Positions Ser1221 to Tyr1224 match the Host ganglioside-binding motif motif.

This sequence belongs to the peptidase M27 family. Heterodimer; disulfide-linked heterodimer of a light chain (LC) and a heavy chain (HC). The LC has the proteolytic/pharmacological activity, while the N- and C-terminal of the HC mediate channel formation and toxin binding, respectively. Interacts with host synaptic vesicle glycoproteins SV2A and SV2B which probably serve as coreceptors. Requires Zn(2+) as cofactor.

Its subcellular location is the secreted. It is found in the host cytoplasm. The protein localises to the host cytosol. The protein resides in the host synapse. It localises to the host presynaptic cell membrane. Its subcellular location is the host cytoplasmic vesicle. It is found in the host secretory vesicle. The protein localises to the host synaptic vesicle membrane. The enzyme catalyses Limited hydrolysis of proteins of the neuroexocytosis apparatus, synaptobrevins, SNAP25 or syntaxin. No detected action on small molecule substrates.. Functionally, botulinum toxin causes flaccid paralysis by inhibiting neurotransmitter (acetylcholine) release from the presynaptic membranes of nerve terminals of eukaryotic host skeletal and autonomic nervous system, with frequent heart or respiratory failure. Precursor of botulinum neurotoxin E which has 2 coreceptors; complex polysialylated gangliosides found on neural tissue and specific membrane-anchored proteins found in synaptic vesicles. Receptor proteins are exposed on host presynaptic cell membrane during neurotransmitter release, when the toxin heavy chain (HC) binds to them. Upon synaptic vesicle recycling the toxin is taken up via the endocytic pathway. When the pH of the toxin-containing endosome drops a structural rearrangement occurs so that the N-terminus of the HC forms pores that allows the light chain (LC) to translocate into the cytosol. Once in the cytosol the disulfide bond linking the 2 subunits is reduced and LC cleaves its target protein on synaptic vesicles, preventing their fusion with the cytoplasmic membrane and thus neurotransmitter release. Has proteolytic activity. After translocation into the eukaryotic host cytosol, LC hydrolyzes the '180-Arg-|-Ile-181' bond in SNAP25, blocking neurotransmitter release. Its function is as follows. Responsible for host epithelial cell transcytosis, host nerve cell targeting and translocation of light chain (LC) into host cytosol. Composed of 3 subdomains; the translocation domain (TD), and N-terminus and C-terminus of the receptor-binding domain (RBD). The RBD is responsible for the adherence of the toxin to the cell surface. It simultaneously recognizes 2 coreceptors; host polysialated gangliosides and the receptor proteins SV2A and SV2B in close proximity on host synaptic vesicles. Interaction with SV2 proteins requires SV2 glycosylation. The N-terminus of the TD wraps an extended belt around the perimeter of the LC, protecting Zn(2+) in the active site; it may also prevent premature LC dissociation from the translocation channel and protect toxin prior to translocation. The TD inserts into synaptic vesicle membrane to allow translocation into the host cytosol. Binds ganglioside GD1a in vitro. This is Botulinum neurotoxin type E from Clostridium butyricum.